We begin with the raw amino-acid sequence, 233 residues long: MPVYALSEAICFPDPSLARADGLLAVGGDLSPERLLNAYCMGIFPWYSEGEPILWWSPNPRLILIPSRFHMSSSLKKTLRQKRFAVTLDTAFKDVMAACAAVRQDHGEGTWIVPEMEKAYRRLHQAGFAHSVEAWQDGELAGGLYGVSLGRGFFGESMFFKRSNASKAAFAVLVEFLTAHEFEFIDCQMKTPHLMSLGAEERPRSVFLDMLHQTLEFPTLRGRWSLESENGLA.

The protein belongs to the L/F-transferase family.

It is found in the cytoplasm. It carries out the reaction N-terminal L-lysyl-[protein] + L-leucyl-tRNA(Leu) = N-terminal L-leucyl-L-lysyl-[protein] + tRNA(Leu) + H(+). The enzyme catalyses N-terminal L-arginyl-[protein] + L-leucyl-tRNA(Leu) = N-terminal L-leucyl-L-arginyl-[protein] + tRNA(Leu) + H(+). The catalysed reaction is L-phenylalanyl-tRNA(Phe) + an N-terminal L-alpha-aminoacyl-[protein] = an N-terminal L-phenylalanyl-L-alpha-aminoacyl-[protein] + tRNA(Phe). In terms of biological role, functions in the N-end rule pathway of protein degradation where it conjugates Leu, Phe and, less efficiently, Met from aminoacyl-tRNAs to the N-termini of proteins containing an N-terminal arginine or lysine. The protein is Leucyl/phenylalanyl-tRNA--protein transferase of Desulfatibacillum aliphaticivorans.